The chain runs to 448 residues: Trigger factor (448 aa).

One can recognise a PPIase FKBP-type domain in the interval 167 to 253 (GSIVRVDFVE…LKDIKRRDIP (87 aa)).

Belongs to the FKBP-type PPIase family. Tig subfamily.

The protein localises to the cytoplasm. It carries out the reaction [protein]-peptidylproline (omega=180) = [protein]-peptidylproline (omega=0). Its function is as follows. Involved in protein export. Acts as a chaperone by maintaining the newly synthesized protein in an open conformation. Functions as a peptidyl-prolyl cis-trans isomerase. This Borrelia turicatae (strain 91E135) protein is Trigger factor.